Consider the following 539-residue polypeptide: Gamma-2-syntrophin (539 aa).

One can recognise a PDZ domain in the interval 73-156; the sequence is TVTLRRQPVG…EVTITVEYLR (84 aa). Composition is skewed to low complexity over residues 168–183 and 194–205; these read SPGP…SSPL and SSTTAPSSPSSP. Positions 168 to 209 are disordered; it reads SPGPSSDHSSGASSPLFDSGLHLNGNSSTTAPSSPSSPIAKD. In terms of domain architecture, PH spans 296-421; that stretch reads QVVHMGWVNE…WEKSFQRATF (126 aa).

Belongs to the syntrophin family. As to quaternary structure, interacts with the dystrophin protein DMD and related proteins DTNA and DTNB. As to expression, widely expressed. Strong expression in brain and testis. In CNS, it is expressed in the perikaryon and proximal portion of the neuronal processes. Strong expression in the hippocampus, neuron-rich dendate granule cells, and pyramidal cell layers. Highly expressed in neurons of the cerebral cortex. Also expressed in the cerebellar cortex, deep cerebellar nuclei, thalamus, and basal ganglia.

Its subcellular location is the cell membrane. The protein resides in the sarcolemma. It is found in the cytoplasm. It localises to the cytoskeleton. In terms of biological role, adapter protein that binds to and probably organizes the subcellular localization of a variety of proteins. May link various receptors to the actin cytoskeleton and the dystrophin glycoprotein complex. This Homo sapiens (Human) protein is Gamma-2-syntrophin (SNTG2).